A 606-amino-acid polypeptide reads, in one-letter code: MIGSKTKRKAREESGASSKPGTNSPANAKGKAKNQTTKAVKAEPKEEWGNQAEARDEAVARTQPAISTEPKTVTWKVKKKKDKTNARVMAQAKTELPAGPALVPHTKSDALPTSVVITVTKSEVKIDTGIEASLKGAAKATDKRSIKQKPEIKKEVCVKSRAGDKAKEVCVKSSAGDKAKEVCVKSRAGDKAKEVCVKSRAGDKASIVINTTDEDEDYVCSWFWTGEEPSVGSWFWPKEENPLQVYQPPPKVEEEPEPPDTFDYALKKKAAAWLRGRFIVLVPIEEPQPSLPPDGNWTLVATLIETPLGIRPLTKIPPYGGPYFQTLADLKNQIREKEKYGPNPNTCRCKSRTFSLEPVDFDKLVALLKLTRDPFIHEIATMIMGISPAYPFTQDIVHDVGITVMIENFVNNPNAKKYPRTLNINANPDAPEEVKETEAHVNKVCRDILCCPLNCSVQVEELKLLVSLSVKFDYHHVVIYYVRYFISLLNKGSVKIKFQILRVLLCLSKNQANTRELISAEVMSSLVALFHKNESKANILHIIEIFENINFQFKKRAKLFTKEMFTKSELISIFREAKEFDQKLQDLTDHSDPDVRDKVIRLILKL.

The tract at residues 1 to 85 (MIGSKTKRKA…KVKKKKDKTN (85 aa)) is disordered. Polar residues predominate over residues 15-26 (GASSKPGTNSPA). A compositionally biased stretch (basic and acidic residues) spans 40–59 (VKAEPKEEWGNQAEARDEAV). ARM repeat units follow at residues 349–388 (CKSR…GISP), 470–509 (VKFD…CLSK), 511–551 (QANT…NINF), and 568–606 (SELI…ILKL).

This sequence belongs to the eutherian X-chromosome-specific Armcx family. In terms of tissue distribution, highly expressed in the developing neural tissues, neural crest derivatives and hind limbs.

This Mus musculus (Mouse) protein is Armadillo repeat-containing X-linked protein 5 (Armcx5).